The chain runs to 131 residues: Fluoride-specific ion channel FluC 2 (131 aa).

4 helical membrane-spanning segments follow: residues 4 to 24, 46 to 66, 71 to 91, and 105 to 125; these read IIQG…ARFW, VSGA…HGVF, PWLF…SFAL, and AISN…LGFA. Residues G81 and T84 each coordinate Na(+).

This sequence belongs to the fluoride channel Fluc/FEX (TC 1.A.43) family.

The protein resides in the cell inner membrane. It catalyses the reaction fluoride(in) = fluoride(out). With respect to regulation, na(+) is not transported, but it plays an essential structural role and its presence is essential for fluoride channel function. Its function is as follows. Fluoride-specific ion channel. Important for reducing fluoride concentration in the cell, thus reducing its toxicity. In Rhodopseudomonas palustris (strain BisB18), this protein is Fluoride-specific ion channel FluC 2.